We begin with the raw amino-acid sequence, 590 residues long: UvrABC system protein C (590 aa).

Positions Asp-14 to Val-91 constitute a GIY-YIG domain. One can recognise a UVR domain in the interval Asn-196–Thr-231.

This sequence belongs to the UvrC family. Interacts with UvrB in an incision complex.

It is found in the cytoplasm. Its function is as follows. The UvrABC repair system catalyzes the recognition and processing of DNA lesions. UvrC both incises the 5' and 3' sides of the lesion. The N-terminal half is responsible for the 3' incision and the C-terminal half is responsible for the 5' incision. The sequence is that of UvrABC system protein C from Bacillus licheniformis (strain ATCC 14580 / DSM 13 / JCM 2505 / CCUG 7422 / NBRC 12200 / NCIMB 9375 / NCTC 10341 / NRRL NRS-1264 / Gibson 46).